Here is a 415-residue protein sequence, read N- to C-terminus: Diaminopimelate decarboxylase (415 aa).

Residue Lys-60 is modified to N6-(pyridoxal phosphate)lysine. Residues Gly-239 and Glu-273–Arg-276 each bind pyridoxal 5'-phosphate. The substrate site is built by Arg-276, Arg-312, and Tyr-316. Cys-342 functions as the Proton donor in the catalytic mechanism. Substrate is bound by residues Glu-343 and Tyr-370. Tyr-370 provides a ligand contact to pyridoxal 5'-phosphate.

The protein belongs to the Orn/Lys/Arg decarboxylase class-II family. LysA subfamily. As to quaternary structure, homodimer. Requires pyridoxal 5'-phosphate as cofactor.

The catalysed reaction is meso-2,6-diaminopimelate + H(+) = L-lysine + CO2. Its pathway is amino-acid biosynthesis; L-lysine biosynthesis via DAP pathway; L-lysine from DL-2,6-diaminopimelate: step 1/1. In terms of biological role, specifically catalyzes the decarboxylation of meso-diaminopimelate (meso-DAP) to L-lysine. The chain is Diaminopimelate decarboxylase from Pseudomonas aeruginosa (strain ATCC 15692 / DSM 22644 / CIP 104116 / JCM 14847 / LMG 12228 / 1C / PRS 101 / PAO1).